The following is a 296-amino-acid chain: tRNA dimethylallyltransferase (296 aa).

2 to 9 is an ATP binding site; it reads GPTASGKT. Residue 4-9 coordinates substrate; that stretch reads TASGKT. Interaction with substrate tRNA regions lie at residues 27–30, 151–155, and 232–237; these read DSAL, QRLSR, and RCVGYR.

It belongs to the IPP transferase family. In terms of assembly, monomer. Mg(2+) is required as a cofactor.

The catalysed reaction is adenosine(37) in tRNA + dimethylallyl diphosphate = N(6)-dimethylallyladenosine(37) in tRNA + diphosphate. Its function is as follows. Catalyzes the transfer of a dimethylallyl group onto the adenine at position 37 in tRNAs that read codons beginning with uridine, leading to the formation of N6-(dimethylallyl)adenosine (i(6)A). In Shewanella sp. (strain MR-7), this protein is tRNA dimethylallyltransferase.